We begin with the raw amino-acid sequence, 84 residues long: NAD(P)H-quinone oxidoreductase subunit O (84 aa).

This sequence belongs to the complex I NdhO subunit family. NDH-1 can be composed of about 15 different subunits; different subcomplexes with different compositions have been identified which probably have different functions.

Its subcellular location is the cellular thylakoid membrane. It carries out the reaction a plastoquinone + NADH + (n+1) H(+)(in) = a plastoquinol + NAD(+) + n H(+)(out). The enzyme catalyses a plastoquinone + NADPH + (n+1) H(+)(in) = a plastoquinol + NADP(+) + n H(+)(out). Its function is as follows. NDH-1 shuttles electrons from an unknown electron donor, via FMN and iron-sulfur (Fe-S) centers, to quinones in the respiratory and/or the photosynthetic chain. The immediate electron acceptor for the enzyme in this species is believed to be plastoquinone. Couples the redox reaction to proton translocation, and thus conserves the redox energy in a proton gradient. Cyanobacterial NDH-1 also plays a role in inorganic carbon-concentration. In Synechococcus sp. (strain CC9605), this protein is NAD(P)H-quinone oxidoreductase subunit O.